A 191-amino-acid polypeptide reads, in one-letter code: LOB domain-containing protein 19 (191 aa).

An LOB domain is found at 15 to 117 (GPCGACKFLR…AELAHVQARL (103 aa)).

Belongs to the LOB domain-containing protein family. Expressed in shoots, roots and floral tissues, but not in stems or leaves.

In Arabidopsis thaliana (Mouse-ear cress), this protein is LOB domain-containing protein 19 (LBD19).